The chain runs to 221 residues: Uracil-DNA glycosylase (221 aa).

Asp65 serves as the catalytic Proton acceptor.

Belongs to the uracil-DNA glycosylase (UDG) superfamily. UNG family.

The protein localises to the cytoplasm. It catalyses the reaction Hydrolyzes single-stranded DNA or mismatched double-stranded DNA and polynucleotides, releasing free uracil.. Excises uracil residues from the DNA which can arise as a result of misincorporation of dUMP residues by DNA polymerase or due to deamination of cytosine. The protein is Uracil-DNA glycosylase of Christiangramia forsetii (strain DSM 17595 / CGMCC 1.15422 / KT0803) (Gramella forsetii).